Reading from the N-terminus, the 326-residue chain is MALTSSVKEELSRLDIKKSSVRKAEVSAMLRFAGGLHIISGRIVIEAEVDLASTARRLRAAIAEVYGHQSEIIVVSGGGLRRGNRYVVRVVRDGEALARQTGLLDARGRPVRGLPSAVVNGSAADAEAVWRGAFLAHGSLTEPGRSSAMEVTCPGPESALALVGAARRLGIQAKAREVRGVDRVVIRDGDTIAALLTRMGAHDALMVWEERRMRKEVRATANRLANFDDANLRRSAQAAVAAGARVDRALEILGDDVPDHLKYAGELRVAHKQASLDELGRLADPPMTKDAIAGRIRRLLAMADKRALDLGIPGTEANVTPEMLDE.

The H-T-H motif DNA-binding region spans 275–308; that stretch reads SLDELGRLADPPMTKDAIAGRIRRLLAMADKRAL.

The protein belongs to the WhiA family.

In terms of biological role, involved in cell division and chromosome segregation. The sequence is that of Probable cell division protein WhiA from Arthrobacter sp. (strain FB24).